The following is a 458-amino-acid chain: tRNA-2-methylthio-N(6)-dimethylallyladenosine synthase (458 aa).

One can recognise an MTTase N-terminal domain in the interval K15–Q134. 6 residues coordinate [4Fe-4S] cluster: C24, C60, C97, C175, C179, and C182. The Radical SAM core domain maps to R161–A393. The TRAM domain maps to R396 to N457.

The protein belongs to the methylthiotransferase family. MiaB subfamily. As to quaternary structure, monomer. Requires [4Fe-4S] cluster as cofactor.

It localises to the cytoplasm. It catalyses the reaction N(6)-dimethylallyladenosine(37) in tRNA + (sulfur carrier)-SH + AH2 + 2 S-adenosyl-L-methionine = 2-methylsulfanyl-N(6)-dimethylallyladenosine(37) in tRNA + (sulfur carrier)-H + 5'-deoxyadenosine + L-methionine + A + S-adenosyl-L-homocysteine + 2 H(+). Its function is as follows. Catalyzes the methylthiolation of N6-(dimethylallyl)adenosine (i(6)A), leading to the formation of 2-methylthio-N6-(dimethylallyl)adenosine (ms(2)i(6)A) at position 37 in tRNAs that read codons beginning with uridine. The protein is tRNA-2-methylthio-N(6)-dimethylallyladenosine synthase of Bartonella quintana (strain Toulouse) (Rochalimaea quintana).